Reading from the N-terminus, the 687-residue chain is DNA ligase (687 aa).

NAD(+)-binding positions include 34-38 (DAEYD), 83-84 (SL), and Glu-117. Lys-119 acts as the N6-AMP-lysine intermediate in catalysis. Residues Arg-140, Glu-182, Lys-298, and Lys-322 each coordinate NAD(+). Residues Cys-416, Cys-419, Cys-434, and Cys-439 each coordinate Zn(2+). Residues 609-687 (EARGPFAGKT…EEEFVRLLKE (79 aa)) enclose the BRCT domain.

This sequence belongs to the NAD-dependent DNA ligase family. LigA subfamily. Requires Mg(2+) as cofactor. Mn(2+) serves as cofactor.

It catalyses the reaction NAD(+) + (deoxyribonucleotide)n-3'-hydroxyl + 5'-phospho-(deoxyribonucleotide)m = (deoxyribonucleotide)n+m + AMP + beta-nicotinamide D-nucleotide.. Functionally, DNA ligase that catalyzes the formation of phosphodiester linkages between 5'-phosphoryl and 3'-hydroxyl groups in double-stranded DNA using NAD as a coenzyme and as the energy source for the reaction. It is essential for DNA replication and repair of damaged DNA. In Anaeromyxobacter sp. (strain K), this protein is DNA ligase.